An 82-amino-acid polypeptide reads, in one-letter code: DNA-directed RNA polymerase subunit omega (82 aa).

Belongs to the RNA polymerase subunit omega family. In cyanobacteria the RNAP catalytic core is composed of 2 alpha, 1 beta, 1 beta', 1 gamma and 1 omega subunit. When a sigma factor is associated with the core the holoenzyme is formed, which can initiate transcription.

It carries out the reaction RNA(n) + a ribonucleoside 5'-triphosphate = RNA(n+1) + diphosphate. Its function is as follows. Promotes RNA polymerase assembly. Latches the N- and C-terminal regions of the beta' subunit thereby facilitating its interaction with the beta and alpha subunits. This is DNA-directed RNA polymerase subunit omega from Synechococcus sp. (strain CC9902).